We begin with the raw amino-acid sequence, 322 residues long: Fructose-1,6-bisphosphatase class 1 1 (322 aa).

Glu84, Asp103, Leu105, and Asp106 together coordinate Mg(2+). Residues 106-109 (DGSS), Asn198, and Lys264 contribute to the substrate site. Residue Glu270 coordinates Mg(2+).

This sequence belongs to the FBPase class 1 family. Homotetramer. It depends on Mg(2+) as a cofactor.

Its subcellular location is the cytoplasm. The enzyme catalyses beta-D-fructose 1,6-bisphosphate + H2O = beta-D-fructose 6-phosphate + phosphate. Its pathway is carbohydrate biosynthesis; gluconeogenesis. The sequence is that of Fructose-1,6-bisphosphatase class 1 1 from Pseudoalteromonas translucida (strain TAC 125).